Reading from the N-terminus, the 334-residue chain is Mediator of RNA polymerase II transcription subunit 4 (334 aa).

Residues 76–100 (LIRTLKAHVEKRDEVIQQVENNLKA) are a coiled coil. The segment covering 188–203 (SSAQKPIIASPSASSS) has biased composition (low complexity). Disordered stretches follow at residues 188-234 (SSAQ…GYGA) and 252-334 (EKQW…GRNK). 2 stretches are compositionally biased toward polar residues: residues 204-225 (NGGT…TNGD) and 264-282 (ATSS…SSPS).

Belongs to the Mediator complex subunit 4 family. In terms of assembly, component of the Mediator complex.

It localises to the nucleus. Its function is as follows. Component of the Mediator complex, a coactivator involved in the regulated transcription of nearly all RNA polymerase II-dependent genes. Mediator functions as a bridge to convey information from gene-specific regulatory proteins to the basal RNA polymerase II transcription machinery. Mediator is recruited to promoters by direct interactions with regulatory proteins and serves as a scaffold for the assembly of a functional preinitiation complex with RNA polymerase II and the general transcription factors. The chain is Mediator of RNA polymerase II transcription subunit 4 (mdt-4) from Caenorhabditis briggsae.